Here is a 157-residue protein sequence, read N- to C-terminus: 3-dehydroquinate dehydratase (157 aa).

The active-site Proton acceptor is the Y24. 3 residues coordinate substrate: N75, H81, and D88. H101 acts as the Proton donor in catalysis. Substrate-binding positions include 102-103 and R112; that span reads LS.

This sequence belongs to the type-II 3-dehydroquinase family. As to quaternary structure, homododecamer.

The enzyme catalyses 3-dehydroquinate = 3-dehydroshikimate + H2O. It functions in the pathway metabolic intermediate biosynthesis; chorismate biosynthesis; chorismate from D-erythrose 4-phosphate and phosphoenolpyruvate: step 3/7. Functionally, catalyzes a trans-dehydration via an enolate intermediate. The sequence is that of 3-dehydroquinate dehydratase from Brucella canis (strain ATCC 23365 / NCTC 10854 / RM-666).